The sequence spans 287 residues: Ethanolamine ammonia-lyase small subunit (287 aa).

Residues Val-168, Glu-189, and Cys-218 each contribute to the adenosylcob(III)alamin site.

The protein belongs to the EutC family. The basic unit is a heterodimer which dimerizes to form tetramers. The heterotetramers trimerize; 6 large subunits form a core ring with 6 small subunits projecting outwards. Adenosylcob(III)alamin is required as a cofactor.

The protein localises to the bacterial microcompartment. The catalysed reaction is ethanolamine = acetaldehyde + NH4(+). The protein operates within amine and polyamine degradation; ethanolamine degradation. Catalyzes the deamination of various vicinal amino-alcohols to oxo compounds. Allows this organism to utilize ethanolamine as the sole source of nitrogen and carbon in the presence of external vitamin B12. In Pseudomonas syringae pv. tomato (strain ATCC BAA-871 / DC3000), this protein is Ethanolamine ammonia-lyase small subunit.